We begin with the raw amino-acid sequence, 769 residues long: DNA helicase/primase complex-associated protein (769 aa).

Belongs to the herpesviridae HEPA family. In terms of assembly, associates with the primase and the helicase to form the helicase-primase complex. Interacts with the origin-binding protein. Interacts with the polymerase catalytic subunit.

It localises to the host nucleus. Functionally, component of the helicase/primase complex. Unwinds the DNA at the replication forks and generates single-stranded DNA for both leading and lagging strand synthesis. The primase synthesizes short RNA primers on the lagging strand that the polymerase presumably elongates using dNTPs. The primase-associated factor has no known catalytic activity in the complex and may serve to facilitate the formation of the replisome by directly interacting with the origin-binding protein and the polymerase. The sequence is that of DNA helicase/primase complex-associated protein (MDV020) from Gallus gallus (Chicken).